We begin with the raw amino-acid sequence, 166 residues long: NAD(P)H-quinone oxidoreductase subunit I, chloroplastic (166 aa).

4Fe-4S ferredoxin-type domains are found at residues 55-84 (GRIH…VDWK) and 95-124 (LNYS…MTEE). [4Fe-4S] cluster is bound by residues Cys-64, Cys-67, Cys-70, Cys-74, Cys-104, Cys-107, Cys-110, and Cys-114.

Belongs to the complex I 23 kDa subunit family. In terms of assembly, NDH is composed of at least 16 different subunits, 5 of which are encoded in the nucleus. The cofactor is [4Fe-4S] cluster.

It localises to the plastid. The protein localises to the chloroplast thylakoid membrane. The catalysed reaction is a plastoquinone + NADH + (n+1) H(+)(in) = a plastoquinol + NAD(+) + n H(+)(out). It carries out the reaction a plastoquinone + NADPH + (n+1) H(+)(in) = a plastoquinol + NADP(+) + n H(+)(out). Its function is as follows. NDH shuttles electrons from NAD(P)H:plastoquinone, via FMN and iron-sulfur (Fe-S) centers, to quinones in the photosynthetic chain and possibly in a chloroplast respiratory chain. The immediate electron acceptor for the enzyme in this species is believed to be plastoquinone. Couples the redox reaction to proton translocation, and thus conserves the redox energy in a proton gradient. This chain is NAD(P)H-quinone oxidoreductase subunit I, chloroplastic, found in Hulsea algida (Pacific hulsea).